Reading from the N-terminus, the 624-residue chain is NADPH-dependent diflavin oxidoreductase 1 (624 aa).

One can recognise a Flavodoxin-like domain in the interval 6 to 168 (IVILYGSETG…VYYEFEKRII (163 aa)). FMN is bound by residues 12-17 (SETGNA), 59-62 (STTG), 106-115 (LGDSSYPRFN), and E142. The region spanning 226 to 474 (ETIRHGTVKK…LQNNHLLHED (249 aa)) is the FAD-binding FR-type domain. Residues R384, 414-417 (RFYS), and 446-449 (GLCT) each bind FAD. Residues 539–540 (SR) and 548–552 (AKYVQ) each bind NADP(+). FAD is bound at residue W624.

It belongs to the NADPH-dependent diflavin oxidoreductase NDOR1 family. The protein in the N-terminal section; belongs to the flavodoxin family. This sequence in the C-terminal section; belongs to the flavoprotein pyridine nucleotide cytochrome reductase family. As to quaternary structure, interacts with DRE2; as part of the cytosolic iron-sulfur (Fe-S) protein assembly (CIA) machinery. It depends on FAD as a cofactor. FMN is required as a cofactor.

It localises to the cytoplasm. The protein resides in the mitochondrion. The catalysed reaction is 2 oxidized [2Fe-2S]-[protein] + NADPH = 2 reduced [2Fe-2S]-[protein] + NADP(+) + H(+). Functionally, NADPH-dependent reductase which is a central component of the cytosolic iron-sulfur (Fe-S) protein assembly (CIA) machinery. Transfers electrons from NADPH via its FAD and FMN prosthetic groups to the [2Fe-2S] cluster of DRE2, another key component of the CIA machinery. In turn, this reduced cluster provides electrons for assembly of cytosolic iron-sulfur cluster proteins. Positively controls H(2)O(2)-induced cell death. The polypeptide is NADPH-dependent diflavin oxidoreductase 1 (Kluyveromyces lactis (strain ATCC 8585 / CBS 2359 / DSM 70799 / NBRC 1267 / NRRL Y-1140 / WM37) (Yeast)).